The primary structure comprises 815 residues: Tubulin polyglutamylase TTLL13 (815 aa).

The TTL domain occupies 85-430 (RRSLAINLTN…RGCDKRKVME (346 aa)). Residues lysine 202, 208-209 (QG), 230-233 (QQYI), and 243-245 (KFD) contribute to the ATP site. Glutamine 208 contributes to the a protein binding site. L-glutamate is bound at residue arginine 269. 291 to 292 (TN) contributes to the ATP binding site. L-glutamate contacts are provided by tyrosine 293 and lysine 311. The Mg(2+) site is built by aspartate 376, glutamate 389, and asparagine 391. The c-MTBD region stretch occupies residues 401–482 (CLDQEVKDAL…LGKYRRIYPG (82 aa)). Lysine 407 serves as a coordination point for L-glutamate. Positions 504–528 (ASKAREECARQQLEEIRLKQEQQET) form a coiled coil. Residues 520–556 (RLKQEQQETSGTKRQKARDQNQGESAGEKSRPRAGLQ) form a disordered region. A compositionally biased stretch (basic and acidic residues) spans 536–550 (ARDQNQGESAGEKSR).

It belongs to the tubulin--tyrosine ligase family. Requires Mg(2+) as cofactor.

It carries out the reaction (L-glutamyl)(n)-gamma-L-glutamyl-L-glutamyl-[protein] + L-glutamate + ATP = (L-glutamyl)(n+1)-gamma-L-glutamyl-L-glutamyl-[protein] + ADP + phosphate + H(+). In terms of biological role, polyglutamylase which modifies tubulin, generating polyglutamate side chains of variable lengths on the gamma-carboxyl group of specific glutamate residues within the C-terminal tail of tubulin. Mediates ATP-dependent polyglutamate side-chain elongation of the polyglutamylation reaction but not the initiation step. Preferentially modifies the alpha-tubulin tail over a beta-tail. The polypeptide is Tubulin polyglutamylase TTLL13 (Homo sapiens (Human)).